We begin with the raw amino-acid sequence, 149 residues long: MARIPECTILLLLCMCVLAVPAQCFNLQPCVLVNETVSVEKEGCPRCLVFRTTICSGHCPTKEPVYKSPFSVVNQHVCTYGNFRYETIRLPDCADGVDPLVTYPVALSCECSLCSMDTSDCTIESVEPDFCMSQRLPVYESQKPSLYDY.

The N-terminal stretch at 1 to 24 (MARIPECTILLLLCMCVLAVPAQC) is a signal peptide. 6 disulfides stabilise this stretch: Cys-30–Cys-78, Cys-44–Cys-93, Cys-47–Cys-131, Cys-55–Cys-109, Cys-59–Cys-111, and Cys-114–Cys-121. The N-linked (GlcNAc...) asparagine glycan is linked to Asn-34.

It belongs to the glycoprotein hormones subunit beta family. In terms of assembly, heterodimer of an alpha and a beta chain.

It localises to the secreted. In terms of biological role, involved in gametogenesis and steroidogenesis. This is Gonadotropin subunit beta-2 (cgbb) from Clupea pallasii (Pacific herring).